The chain runs to 153 residues: Bkd operon transcriptional regulator (153 aa).

The HTH asnC-type domain maps to 4 to 65 (LDRIDLKILR…RLDEERLSGA (62 aa)). Positions 23-42 (WRDLAQKVGLSLTPTLRRVR) form a DNA-binding region, H-T-H motif.

Functionally, positive regulator of the bkd operon for branched-chain keto acid dehydrogenase complex. The sequence is that of Bkd operon transcriptional regulator (bkdR) from Pseudomonas aeruginosa (strain ATCC 15692 / DSM 22644 / CIP 104116 / JCM 14847 / LMG 12228 / 1C / PRS 101 / PAO1).